A 994-amino-acid polypeptide reads, in one-letter code: Translocase of chloroplast 108, chloroplastic (994 aa).

Disordered stretches follow at residues 14 to 61 (KEAS…EDEP), 84 to 124 (TTDL…DPSV), and 152 to 287 (AVDG…DETR). Composition is skewed to polar residues over residues 37–53 (GETT…ANES) and 84–98 (TTDL…TPSN). Residues 99–121 (AEKESPEATEVRIVEEGKLEKAD) are compositionally biased toward basic and acidic residues. Residues 166-197 (NDGDTDANTADEDNENDEDDVDEDEDEDDADM) show a composition bias toward acidic residues. Residues 249–268 (ASDSPGRNTQRPNGALSTQI) show a composition bias toward polar residues. Over residues 269–280 (TSTTDESASSDA) the composition is skewed to low complexity. In terms of domain architecture, AIG1-type G spans 360–589 (DFACTILVLG…KLQETTAPGR (230 aa)). Positions 369–376 (GKTGVGKS) are G1. 372 to 377 (GVGKSS) is a binding site for GTP. Ser-376 is a binding site for Mg(2+). A G2 region spans residues 395–399 (PSTNK). The segment at 416–419 (DTPG) is G3. A G4 region spans residues 488-491 (THAS). GTP contacts are provided by residues His-489 and 537–538 (EN). A G5 region spans residues 537-539 (ENH). Disordered stretches follow at residues 616 to 659 (LPDE…EDLT) and 691 to 716 (EAKK…EAGN). Over residues 620–643 (QAGESDESDDDEEEEDSDADDYDE) the composition is skewed to acidic residues. Over residues 650–659 (LSKEELEDLT) the composition is skewed to basic and acidic residues. Acidic residues predominate over residues 705 to 714 (AEAEEAEDEA). A helical membrane pass occupies residues 969 to 989 (MVLIGIVPILRSLINCRFGFG).

The protein belongs to the TRAFAC class TrmE-Era-EngA-EngB-Septin-like GTPase superfamily. AIG1/Toc34/Toc159-like paraseptin GTPase family. TOC159 subfamily. In terms of assembly, part of the TOC core complex. The cofactor is Mg(2+).

The protein resides in the plastid. It localises to the chloroplast outer membrane. Functionally, GTPase involved in protein precursor import into chloroplasts. Seems to recognize chloroplast-destined precursor proteins and regulate their presentation to the translocation channel through GTP hydrolysis. Probably specialized in the import of nuclear encoded non-photosynthetic preproteins from the cytoplasm to the chloroplast. In Physcomitrium patens (Spreading-leaved earth moss), this protein is Translocase of chloroplast 108, chloroplastic.